Consider the following 78-residue polypeptide: U-scoloptoxin(04)-Er1b (78 aa).

The signal sequence occupies residues 1 to 24; sequence MTRHLIFAAVLLVCLFVCWNAVGA. Positions 25-28 are excised as a propeptide; it reads QDAR.

Belongs to the scoloptoxin-04 family. Post-translationally, contains 2 disulfide bonds. In terms of tissue distribution, expressed by the venom gland.

Its subcellular location is the secreted. This is U-scoloptoxin(04)-Er1b from Ethmostigmus rubripes (Giant centipede).